The following is a 1451-amino-acid chain: Spike glycoprotein (1451 aa).

Positions 1 to 31 (MIVLTLCLFLFLYSSVSCTSNNDCVQVNVTQ) are cleaved as a signal peptide. Residues 32 to 779 (LPGNENIIKD…WTTTPNFYYY (748 aa)) form an S1 region. At 32 to 1392 (LPGNENIIKD…NRIETYVKWP (1361 aa)) the chain is on the virion surface side. The tract at residues 660 to 803 (VIYEEGDNIV…IDNDIDCEPI (144 aa)) is interaction with host ANPEP. The interval 780-1451 (SIYNYTNVMN…YEPIEKVHVH (672 aa)) is S2. The tract at residues 1024 to 1045 (TGGITLGALSGGAVAIPFAVAV) is fusion peptide. The heptad repeat 1 (HR1) stretch occupies residues 1039–1158 (IPFAVAVQAR…QVDRLITGRL (120 aa)). 2 coiled-coil regions span residues 1106–1150 (QDVV…DAQV) and 1340–1382 (TYLN…LEWL). A heptad repeat 2 (HR2) region spans residues 1307–1404 (PDYIDINQTV…VWLLIGLVVI (98 aa)). Residues 1393–1412 (WYVWLLIGLVVIFCIPILLF) traverse the membrane as a helical segment. Residues 1413–1451 (CCCSTGCCGCIGCLGSCCHSICSRGQFESYEPIEKVHVH) are Intravirion-facing. The KxHxx motif lies at 1447-1451 (KVHVH).

The protein belongs to the alphacoronaviruses spike protein family. Homotrimer. During virus morphogenesis, found in a complex with M and HE proteins. Interacts with host ANPEP.

Its subcellular location is the virion membrane. It localises to the host endoplasmic reticulum-Golgi intermediate compartment membrane. S1 region attaches the virion to the cell membrane by interacting with host ANPEP/aminopeptidase N, initiating the infection. Binding to the receptor probably induces conformational changes in the S glycoprotein unmasking the fusion peptide of S2 region and activating membranes fusion. S2 region belongs to the class I viral fusion protein. Under the current model, the protein has at least 3 conformational states: pre-fusion native state, pre-hairpin intermediate state, and post-fusion hairpin state. During viral and target cell membrane fusion, the coiled coil regions (heptad repeats) regions assume a trimer-of-hairpins structure, positioning the fusion peptide in close proximity to the C-terminal region of the ectodomain. The formation of this structure appears to drive apposition and subsequent fusion of viral and target cell membranes. This chain is Spike glycoprotein, found in Canine coronavirus (strain Insavc-1) (CCoV).